Reading from the N-terminus, the 370-residue chain is Acyl-CoA:lysophosphatidylglycerol acyltransferase 1 (370 aa).

A helical transmembrane segment spans residues 22–42 (FAFMVVNNLVAIPSYICYVII). Residues 101-106 (HQATGD) carry the HXXXXD motif motif. Residues 342–362 (LWIFLIQSFAFLSGYMWYNII) traverse the membrane as a helical segment.

The protein belongs to the 1-acyl-sn-glycerol-3-phosphate acyltransferase family. Highly expressed in liver and placenta. Also expressed in peripheral blood, lung, kidney and brain. Detected at lower levels in colon. High expression is detected in brain and testis.

The protein localises to the endoplasmic reticulum membrane. It catalyses the reaction a 2-acyl-sn-glycero-3-phosphoethanolamine + octadecanoyl-CoA = 1-octadecanoyl-2-acyl-sn-glycero-3-phosphoethanolamine + CoA. It carries out the reaction 2-(9Z-octadecenoyl)-sn-glycero-3-phosphoethanolamine + octadecanoyl-CoA = 1-octadecanoyl-2-(9Z-octadecenoyl)-sn-glycero-3-phosphoethanolamine + CoA. The enzyme catalyses a 2-acyl-sn-glycero-3-phosphoethanolamine + hexadecanoyl-CoA = 1-hexadecanoyl-2-acyl-sn-glycero-3-phosphoethanolamine + CoA. The catalysed reaction is 2-(9Z-octadecenoyl)-sn-glycero-3-phosphoethanolamine + hexadecanoyl-CoA = 1-hexadecanoyl-2-(9Z-octadecenoyl)-sn-glycero-3-phosphoethanolamine + CoA. It catalyses the reaction 1-tetradecanoyl-sn-glycero-3-phospho-(1'-sn-glycerol) + hexadecanoyl-CoA = 1-tetradecanoyl-2-hexadecanoyl-sn-glycero-3-phospho-(1'-sn-glycerol) + CoA. It carries out the reaction 1-hexadecanoyl-sn-glycero-3-phospho-(1'-sn-glycerol) + dodecanoyl-CoA = 1-hexadecanoyl-2-dodecanoyl-sn-glycero-3-phospho-(1'-sn-glycerol) + CoA. The enzyme catalyses 1-hexadecanoyl-sn-glycero-3-phospho-(1'-sn-glycerol) + hexadecanoyl-CoA = 1,2-dihexadecanoyl-sn-glycero-3-phospho-(1'-sn-glycerol) + CoA. The catalysed reaction is 1-hexadecanoyl-sn-glycero-3-phospho-(1'-sn-glycerol) + octadecanoyl-CoA = 1-hexadecanoyl-2-octadecanoyl-sn-glycero-3-phospho-(1'-sn-glycerol) + CoA. It catalyses the reaction 1-octadecanoyl-sn-glycero-3-phospho-(1'-sn-glycerol) + hexadecanoyl-CoA = 1-octadecanoyl-2-hexadecanoyl-sn-glycero-3-phospho-(1'-sn-glycerol) + CoA. It carries out the reaction 1-(9Z-octadecenoyl)-sn-glycero-3-phospho-(1'-sn-glycerol) + dodecanoyl-CoA = 1-(9Z-octadecenoyl)-2-dodecanoyl-sn-glycero-3-phospho-(1'-sn-glycerol) + CoA. The enzyme catalyses 1-hexadecanoyl-sn-glycero-3-phospho-(1'-sn-glycerol) + (9Z)-octadecenoyl-CoA = 1-hexadecanoyl-2-(9Z-octadecenoyl)-sn-glycero-3-phospho-(1'-sn-glycerol) + CoA. The catalysed reaction is 1-(9Z-octadecenoyl)-sn-glycero-3-phospho-(1'-sn-glycerol) + hexadecanoyl-CoA = 1-(9Z-octadecenoyl)-2-hexadecanoyl-sn-glycero-3-phospho-(1'-sn-glycerol) + CoA. It catalyses the reaction 1-(9Z-octadecenoyl)-sn-glycero-3-phospho-(1'-sn-glycerol) + (9Z)-octadecenoyl-CoA = 1,2-di-(9Z-octadecenoyl)-sn-glycero-3-phospho-(1'-sn-glycerol) + CoA. It carries out the reaction a 2-acylglycerol + an acyl-CoA = a 1,2-diacylglycerol + CoA. The enzyme catalyses a 2-acylglycerol + hexadecanoyl-CoA = a 1-hexadecanoyl-2-acylglycerol + CoA. The catalysed reaction is a 1-acylglycerol + hexadecanoyl-CoA = an hexadecanoyl-acylglycerol + CoA. It catalyses the reaction a 2-acyl-sn-glycero-3-phosphocholine + an acyl-CoA = a 1,2-diacyl-sn-glycero-3-phosphocholine + CoA. It carries out the reaction 2-(9Z-octadecenoyl)-sn-glycero-3-phosphocholine + octadecanoyl-CoA = 1-octadecanoyl-2-(9Z-octadecenoyl)-sn-glycero-3-phosphocholine + CoA. The enzyme catalyses 2-(9Z,12Z-octadecadienoyl)-sn-glycero-3-phosphocholine + octadecanoyl-CoA = 1-octadecanoyl-2-(9Z,12Z)-octadecadienoyl-sn-glycero-3-phosphocholine + CoA. The catalysed reaction is 2-(5Z,8Z,11Z,14Z)-eicosatetraenoyl-sn-glycero-3-phosphocholine + octadecanoyl-CoA = 1-octadecanoyl-2-(5Z,8Z,11Z,14Z-eicosatetraenoyl)-sn-glycero-3-phosphocholine + CoA. It catalyses the reaction 2-(9Z-octadecenoyl)-sn-glycero-3-phosphocholine + hexadecanoyl-CoA = 1-hexadecanoyl-2-(9Z-octadecenoyl)-sn-glycero-3-phosphocholine + CoA. It carries out the reaction 2-(9Z-octadecenoyl)-sn-glycero-3-phospho-L-serine + hexadecanoyl-CoA = 1-hexadecanoyl-2-(9Z-octadecenoyl)-sn-glycero-3-phospho-L-serine + CoA. The enzyme catalyses 2-(4Z,7Z,10Z,13Z,16Z,19Z-docosahexaenoyl)-sn-glycero-3-phosphocholine + octadecanoyl-CoA = 1-octadecanoyl-2-(4Z,7Z,10Z,13Z,16Z,19Z-docosahexaenoyl)-sn-glycero-3-phosphocholine + CoA. The catalysed reaction is 1-(9Z-octadecenoyl)-sn-glycero-3-phospho-L-serine + octadecanoyl-CoA = 1-(9Z-octadecenoyl)-2-octadecanoyl-sn-glycero-3-phospho-L-serine + CoA. It catalyses the reaction a 2-acyl-sn-glycero-3-phosphoethanolamine + a fatty acyl-CoA = a 1,2-diacyl-sn-glycero-3-phosphoethanolamine + CoA. In terms of biological role, lysophospholipid acyltransferase involved in fatty acyl chain remodeling of glycerophospholipids in the endoplasmic reticulum membrane. Selectively catalyzes the transfer and esterification of saturated long-chain fatty acids from acyl-CoA to the sn-1 position of 1-lyso-2-acyl phosphatidylethanolamines (1-lyso-PE, LPE), with a preference for stearoyl CoA over palmitoyl CoA as acyl donor. Acts in concert with an unknown phospholipase A1 to convert palmitate phosphatidylethanolamine (PE) species into stearate ones. Provides substrates to the PE methylation pathway, controlling stearate/palmitate composition of PE and phosphatidylcholine (PC) species with an overall impact on de novo hepatic lipid synthesis, body fat content and life span. Can acylate lysophosphatidylglycerols (LPG) using various saturated fatty acyl-CoAs as acyl donors. Can also acylate monoacylglycerols with a preference for 2-monoacylglycerols over 1-monoacylglycerols. Has no activity toward lysophosphatidic acids (LPA). The protein is Acyl-CoA:lysophosphatidylglycerol acyltransferase 1 of Homo sapiens (Human).